The chain runs to 263 residues: 3-methyl-2-oxobutanoate hydroxymethyltransferase 2 (263 aa).

Mg(2+) is bound by residues Asp45 and Asp84. Residues 45–46, Asp84, and Lys112 contribute to the 3-methyl-2-oxobutanoate site; that span reads DS. Glu114 contributes to the Mg(2+) binding site. The active-site Proton acceptor is the Glu181.

It belongs to the PanB family. In terms of assembly, homodecamer; pentamer of dimers. Requires Mg(2+) as cofactor.

The protein resides in the cytoplasm. The enzyme catalyses 3-methyl-2-oxobutanoate + (6R)-5,10-methylene-5,6,7,8-tetrahydrofolate + H2O = 2-dehydropantoate + (6S)-5,6,7,8-tetrahydrofolate. It functions in the pathway cofactor biosynthesis; (R)-pantothenate biosynthesis; (R)-pantoate from 3-methyl-2-oxobutanoate: step 1/2. Its function is as follows. Catalyzes the reversible reaction in which hydroxymethyl group from 5,10-methylenetetrahydrofolate is transferred onto alpha-ketoisovalerate to form ketopantoate. This is 3-methyl-2-oxobutanoate hydroxymethyltransferase 2 from Aliivibrio fischeri (strain ATCC 700601 / ES114) (Vibrio fischeri).